We begin with the raw amino-acid sequence, 226 residues long: Cytidylate kinase (226 aa).

Residue 10-18 (GPASSGKST) participates in ATP binding.

This sequence belongs to the cytidylate kinase family. Type 1 subfamily.

It localises to the cytoplasm. The enzyme catalyses CMP + ATP = CDP + ADP. It catalyses the reaction dCMP + ATP = dCDP + ADP. The sequence is that of Cytidylate kinase from Streptococcus thermophilus (strain CNRZ 1066).